The sequence spans 296 residues: Protein TIC 21, chloroplastic (296 aa).

The N-terminal 90 residues, M1–S90, are a transit peptide targeting the chloroplast. A run of 4 helical transmembrane segments spans residues F125–V145, Y156–I176, V208–V228, and V250–L270.

Homomultimer. Part of the translocon complex. As to expression, ubiquitous. Highest expression in green tissues and very low levels in mature pollen.

Its subcellular location is the plastid. The protein localises to the chloroplast inner membrane. Its function is as follows. Involved in chloroplast protein import across the inner envelope membrane. Also acts as a chloroplast permease regulating the iron transport and homeostasis. Involved in the uptake and sequestration of iron in plastids. The polypeptide is Protein TIC 21, chloroplastic (TIC21) (Arabidopsis thaliana (Mouse-ear cress)).